The following is a 381-amino-acid chain: Chaperone protein DnaJ (381 aa).

The 66-residue stretch at 5–70 (DFYEVLGVGR…QKKAAYDQYG (66 aa)) folds into the J domain. The segment at 136–214 (GCSKEIEVPT…CHGQGRKQKT (79 aa)) adopts a CR-type zinc-finger fold. 8 residues coordinate Zn(2+): Cys149, Cys152, Cys166, Cys169, Cys188, Cys191, Cys202, and Cys205. CXXCXGXG motif repeat units follow at residues 149–156 (CDACDGSG), 166–173 (CGTCHGHG), 188–195 (CPTCHGKG), and 202–209 (CNVCHGQG).

The protein belongs to the DnaJ family. Homodimer. The cofactor is Zn(2+).

The protein localises to the cytoplasm. Participates actively in the response to hyperosmotic and heat shock by preventing the aggregation of stress-denatured proteins and by disaggregating proteins, also in an autonomous, DnaK-independent fashion. Unfolded proteins bind initially to DnaJ; upon interaction with the DnaJ-bound protein, DnaK hydrolyzes its bound ATP, resulting in the formation of a stable complex. GrpE releases ADP from DnaK; ATP binding to DnaK triggers the release of the substrate protein, thus completing the reaction cycle. Several rounds of ATP-dependent interactions between DnaJ, DnaK and GrpE are required for fully efficient folding. Also involved, together with DnaK and GrpE, in the DNA replication of plasmids through activation of initiation proteins. In Vibrio cholerae serotype O1 (strain ATCC 39541 / Classical Ogawa 395 / O395), this protein is Chaperone protein DnaJ.